The following is a 252-amino-acid chain: Ribose-5-phosphate isomerase (252 aa).

It belongs to the ribose 5-phosphate isomerase family.

The protein resides in the cytoplasm. The enzyme catalyses aldehydo-D-ribose 5-phosphate = D-ribulose 5-phosphate. Its pathway is carbohydrate degradation; pentose phosphate pathway; D-ribose 5-phosphate from D-ribulose 5-phosphate (non-oxidative stage): step 1/1. The polypeptide is Ribose-5-phosphate isomerase (RKI1) (Debaryomyces hansenii (strain ATCC 36239 / CBS 767 / BCRC 21394 / JCM 1990 / NBRC 0083 / IGC 2968) (Yeast)).